A 159-amino-acid polypeptide reads, in one-letter code: Single-stranded DNA-binding protein 2 (159 aa).

Residues 2–104 (MNRVVLVGRL…VVAESVQFLE (103 aa)) enclose the SSB domain. The disordered stretch occupies residues 106 to 159 (RNHAEGATSNNYQNEANYSNNNKTSSYRADTSQKSDSFANEGKPIDINPDDLPF). The span at 114–127 (SNNYQNEANYSNNN) shows a compositional bias: low complexity. Polar residues predominate over residues 128 to 143 (KTSSYRADTSQKSDSF).

Homotetramer.

This chain is Single-stranded DNA-binding protein 2 (ssb2), found in Listeria innocua serovar 6a (strain ATCC BAA-680 / CLIP 11262).